Here is a 231-residue protein sequence, read N- to C-terminus: Uridylate kinase (231 aa).

6 to 9 contacts ATP; the sequence is KLSG. The tract at residues 14–19 is involved in allosteric activation by GTP; sequence GEGGRG. ATP-binding residues include G49 and R53. Residues D66 and 127–134 each bind UMP; that span reads TSNPFFTT. ATP-binding residues include T154, Y160, and D163.

It belongs to the UMP kinase family. In terms of assembly, homohexamer.

Its subcellular location is the cytoplasm. It carries out the reaction UMP + ATP = UDP + ADP. It participates in pyrimidine metabolism; CTP biosynthesis via de novo pathway; UDP from UMP (UMPK route): step 1/1. Allosterically activated by GTP. Inhibited by UTP. In terms of biological role, catalyzes the reversible phosphorylation of UMP to UDP. The polypeptide is Uridylate kinase (Thermotoga maritima (strain ATCC 43589 / DSM 3109 / JCM 10099 / NBRC 100826 / MSB8)).